Here is a 184-residue protein sequence, read N- to C-terminus: Photosystem I assembly protein Ycf4 (184 aa).

Helical transmembrane passes span 22 to 42 and 57 to 77; these read LCWA…GTSS and ILFF…LFIS.

Belongs to the Ycf4 family.

It is found in the plastid. The protein resides in the chloroplast thylakoid membrane. In terms of biological role, seems to be required for the assembly of the photosystem I complex. This is Photosystem I assembly protein Ycf4 from Daucus carota (Wild carrot).